The primary structure comprises 209 residues: uncharacterized protein (209 aa).

It belongs to the flavoredoxin family. It depends on FMN as a cofactor.

This is an uncharacterized protein from Halalkalibacterium halodurans (strain ATCC BAA-125 / DSM 18197 / FERM 7344 / JCM 9153 / C-125) (Bacillus halodurans).